A 205-amino-acid chain; its full sequence is Large ribosomal subunit protein uL3 (205 aa).

The protein belongs to the universal ribosomal protein uL3 family. Part of the 50S ribosomal subunit. Forms a cluster with proteins L14 and L19.

In terms of biological role, one of the primary rRNA binding proteins, it binds directly near the 3'-end of the 23S rRNA, where it nucleates assembly of the 50S subunit. The protein is Large ribosomal subunit protein uL3 of Parabacteroides distasonis (strain ATCC 8503 / DSM 20701 / CIP 104284 / JCM 5825 / NCTC 11152).